The primary structure comprises 331 residues: ADP-L-glycero-D-manno-heptose-6-epimerase (331 aa).

Residues 11 to 12, 32 to 33, lysine 39, lysine 54, 75 to 79, and asparagine 92 each bind NADP(+); these read FI, DN, and EGACS. Tyrosine 139 serves as the catalytic Proton acceptor. NADP(+) is bound at residue lysine 143. Asparagine 168 contacts substrate. NADP(+) is bound by residues valine 169 and lysine 177. Lysine 177 acts as the Proton acceptor in catalysis. Substrate is bound by residues arginine 179, histidine 186, 200 to 203, arginine 213, and tyrosine 292; that span reads FGEY.

The protein belongs to the NAD(P)-dependent epimerase/dehydratase family. HldD subfamily. Homopentamer. The cofactor is NADP(+).

The enzyme catalyses ADP-D-glycero-beta-D-manno-heptose = ADP-L-glycero-beta-D-manno-heptose. Its pathway is nucleotide-sugar biosynthesis; ADP-L-glycero-beta-D-manno-heptose biosynthesis; ADP-L-glycero-beta-D-manno-heptose from D-glycero-beta-D-manno-heptose 7-phosphate: step 4/4. Functionally, catalyzes the interconversion between ADP-D-glycero-beta-D-manno-heptose and ADP-L-glycero-beta-D-manno-heptose via an epimerization at carbon 6 of the heptose. The protein is ADP-L-glycero-D-manno-heptose-6-epimerase of Cupriavidus taiwanensis (strain DSM 17343 / BCRC 17206 / CCUG 44338 / CIP 107171 / LMG 19424 / R1) (Ralstonia taiwanensis (strain LMG 19424)).